A 499-amino-acid polypeptide reads, in one-letter code: Glycerol kinase (499 aa).

Threonine 12 contacts ADP. Threonine 12, threonine 13, and serine 14 together coordinate ATP. Threonine 12 contributes to the sn-glycerol 3-phosphate binding site. Arginine 16 provides a ligand contact to ADP. Arginine 82, glutamate 83, tyrosine 134, and aspartate 243 together coordinate sn-glycerol 3-phosphate. Residues arginine 82, glutamate 83, tyrosine 134, aspartate 243, and glutamine 244 each coordinate glycerol. Threonine 265 and glycine 308 together coordinate ADP. 4 residues coordinate ATP: threonine 265, glycine 308, glutamine 312, and glycine 409. 2 residues coordinate ADP: glycine 409 and asparagine 413.

The protein belongs to the FGGY kinase family. As to quaternary structure, homotetramer and homodimer (in equilibrium).

It carries out the reaction glycerol + ATP = sn-glycerol 3-phosphate + ADP + H(+). It functions in the pathway polyol metabolism; glycerol degradation via glycerol kinase pathway; sn-glycerol 3-phosphate from glycerol: step 1/1. Activated by phosphorylation and inhibited by fructose 1,6-bisphosphate (FBP). Its function is as follows. Key enzyme in the regulation of glycerol uptake and metabolism. Catalyzes the phosphorylation of glycerol to yield sn-glycerol 3-phosphate. This is Glycerol kinase from Lachnoclostridium phytofermentans (strain ATCC 700394 / DSM 18823 / ISDg) (Clostridium phytofermentans).